Consider the following 117-residue polypeptide: Large ribosomal subunit protein bL19 (117 aa).

The protein belongs to the bacterial ribosomal protein bL19 family.

Its function is as follows. This protein is located at the 30S-50S ribosomal subunit interface and may play a role in the structure and function of the aminoacyl-tRNA binding site. The protein is Large ribosomal subunit protein bL19 of Alkalilimnicola ehrlichii (strain ATCC BAA-1101 / DSM 17681 / MLHE-1).